Consider the following 243-residue polypeptide: MAVNNISKKRKFVGDGVFKAELNEFLTRELAEDGYSGVEVRVTPTRSEIIIMATRTQSVLGEKGRRIRELTSVVQKRFNIPEQSVELYAEKVATRGLCAIAQAESLRYKLIGGLAVRRACYGVLRFIMESGARGCEVVVSGKLRGQRAKSMKFVDGLMIHSGDPCNDYVNTATRHVLLRQGVLGIKVKIMLPWDQQGKNGPKKPQPDHILVTEPKDEPAPLEPTSDIRSLAPAPLPQPVAAVA.

The KH type-2 domain maps to 22-93; sequence LNEFLTRELA…SVELYAEKVA (72 aa). The interval 195-243 is disordered; sequence QQGKNGPKKPQPDHILVTEPKDEPAPLEPTSDIRSLAPAPLPQPVAAVA.

Belongs to the universal ribosomal protein uS3 family.

This is Small ribosomal subunit protein uS3 (RpS3) from Manduca sexta (Tobacco hawkmoth).